The following is a 370-amino-acid chain: Protein PAM71, chloroplastic (370 aa).

The disordered stretch occupies residues Met1–Cys38. A chloroplast-targeting transit peptide spans Met1–Arg73. A compositionally biased stretch (low complexity) spans Ser22–Cys38. Residues Cys74–Arg113 lie on the Stromal side of the membrane. Residues Val114–Ala134 traverse the membrane as a helical segment. At Ala135–Ser161 the chain is on the lumenal, thylakoid side. A helical membrane pass occupies residues Ala162–Leu182. Residues Ala183–Ala188 are Stromal-facing. A helical transmembrane segment spans residues Ala189–Leu209. Residues Gly210–Asp228 lie on the Lumenal, thylakoid side of the membrane. The helical transmembrane segment at Leu229–Leu249 threads the bilayer. The Stromal portion of the chain corresponds to Asp250–Asn275. A helical membrane pass occupies residues Gly276–Ala296. The Lumenal, thylakoid segment spans residues Glu297–Pro315. A helical transmembrane segment spans residues Leu316–Gly336. Residues Gly337–Ala348 are Stromal-facing. The helical transmembrane segment at Ile349–Val369 threads the bilayer. A topological domain (lumenal, thylakoid) is located at residue Thr370.

Belongs to the GDT1 family. Homodimer.

It is found in the plastid. It localises to the chloroplast membrane. Its subcellular location is the thylakoid. Mn(2+)/H(+) exchanger, which transport Mn(2+)from the chloroplast stroma into the acidic thylakoid lumen. Might be a chloroplast-localized Ca(2+)/H(+) antiporter. Regulates Ca(2+), Mn(2+) and pH homeostasis. Required for chloroplast development. This is Protein PAM71, chloroplastic from Arabidopsis thaliana (Mouse-ear cress).